The sequence spans 328 residues: MTGVFDSLVADMHSTQIAASSTYHQHQQPPSGGGAGPGGNSSSSSSLHKPQESPTLPVSTATDSSYYTNQQHPAGGGGGGGSPYAHMGSYQYQASGLNNVPYSAKSSYDLGYTAAYTSYAPYGTSSSPANNEPEKEDLEPEIRIVNGKPKKVRKPRTIYSSFQLAALQRRFQKTQYLALPERAELAASLGLTQTQVKIWFQNRRSKFKKMWKSGEIPSEQHPGASASPPCASPPVSAPASWDFGVPQRMAGGGGPGSGGSGAGSSGSSPSSAASAFLGNYPWYHQTSGSASHLQATAPLLHPTQTPQPHHHHHHHGGGGAPVSAGTIF.

2 stretches are compositionally biased toward polar residues: residues 16–28 (QIAASSTYHQHQQ) and 52–72 (ESPTLPVSTATDSSYYTNQQH). Disordered stretches follow at residues 16–81 (QIAA…GGGG), 211–270 (WKSG…SSPS), and 300–328 (LHPTQTPQPHHHHHHHGGGGAPVSAGTIF). A DNA-binding region (homeobox) is located at residues 152–211 (VRKPRTIYSSFQLAALQRRFQKTQYLALPERAELAASLGLTQTQVKIWFQNRRSKFKKMW). The residue at position 232 (serine 232) is a Phosphoserine. Residues 250-264 (AGGGGPGSGGSGAGS) show a composition bias toward gly residues.

The protein belongs to the distal-less homeobox family. In terms of assembly, interacts (via homeobox DNA-binding domain) with POU4F2; this interaction enhances retinal ganglion cell (RGC) differentiation.

It localises to the nucleus. In terms of biological role, acts as a transcriptional activator. Activates transcription of CGA/alpha-GSU, via binding to the downstream activin regulatory element (DARE) in the gene promoter. Plays a role in terminal differentiation of interneurons, such as amacrine and bipolar cells in the developing retina. Likely to play a regulatory role in the development of the ventral forebrain. May play a role in craniofacial patterning and morphogenesis. The chain is Homeobox protein DLX-2 (DLX2) from Homo sapiens (Human).